Here is a 691-residue protein sequence, read N- to C-terminus: MPRSHPIEDYRNFGIMAHIDAGKTTTTERILYYSGKSHKIGEVHDGAATMDWMEQEQERGITITSAATTTFWNGRRLNIIDTPGHVDFTIEVERSLRVLDGAVCVLDGNQGVEPQTETVWRQADKYNVPRIVFVNKMDKIGADFYRCVEDIKTKVGGRPVCIQLPIGSEADFKGIIDLVRMKAVVWEDEALGAKYHDEEIPDDLKEKAIHYRNLLVEAAVELDDDAMTAYLEGVEPDEALLKLLIRKAVRQITFIPVLCGSAFKNKGVQPLLDAVVDYLPTPIDREAIKGVDVNTGEETVRLPSDSEPFSMLAFKIMDDPFVGSITFARVYSGKIESGTSVVNSTKDKKERIGRMLLMHANNREDIKEAYAGDIVALAGLKETRTGDTLCDVNKPVILERMEFPEPVIEIAIEPKSKADQEKLGIALSKLAAEDPSFRVSTDQESGQTILKGMGELHLDIKVDILKRTYKVDANIGAPQVAYREKLMRRVEIDETHKKQTGGTGQFARVKMIFEPNEAAAGNAFESNIVGGAVPKEYIPGVEKGLYSVLNSGVLAGFPVVDVKATLIDGAFHEVDSSVLAFEICSRAATRRALKEGGSVLLEPIMKVEVTTPEEYTGSVMGDLLGRRGQVQGQDMRGNAVVINAMVPLANMFGYVNQLRSFSQGRANYSMQFDHYEQVPANEAAKVQAKYA.

Positions 8 to 283 (EDYRNFGIMA…AVVDYLPTPI (276 aa)) constitute a tr-type G domain. GTP-binding positions include 17–24 (AHIDAGKT), 81–85 (DTPGH), and 135–138 (NKMD).

Belongs to the TRAFAC class translation factor GTPase superfamily. Classic translation factor GTPase family. EF-G/EF-2 subfamily.

It localises to the cytoplasm. Its function is as follows. Catalyzes the GTP-dependent ribosomal translocation step during translation elongation. During this step, the ribosome changes from the pre-translocational (PRE) to the post-translocational (POST) state as the newly formed A-site-bound peptidyl-tRNA and P-site-bound deacylated tRNA move to the P and E sites, respectively. Catalyzes the coordinated movement of the two tRNA molecules, the mRNA and conformational changes in the ribosome. The protein is Elongation factor G of Beijerinckia indica subsp. indica (strain ATCC 9039 / DSM 1715 / NCIMB 8712).